The sequence spans 111 residues: uncharacterized protein (111 aa).

Residues isoleucine 4 to alanine 111 enclose the HIT domain. The short motif at histidine 96 to histidine 100 is the Histidine triad motif element.

This is an uncharacterized protein from Chlamydia trachomatis serovar D (strain ATCC VR-885 / DSM 19411 / UW-3/Cx).